Consider the following 630-residue polypeptide: Putative polypeptide N-acetylgalactosaminyltransferase 10 (630 aa).

The Cytoplasmic portion of the chain corresponds to 1–6; it reads MNVDLR. The helical; Signal-anchor for type II membrane protein transmembrane segment at 7–26 threads the bilayer; sequence LIVRLLLAILLTSLVTTILM. At 27–630 the chain is on the lumenal side; sequence GKQIHRRLVK…APYDPQREPH (604 aa). Residues N72, N84, N146, and N168 are each glycosylated (N-linked (GlcNAc...) asparagine). Disulfide bonds link C157–C386, C377–C456, and C496–C513. The catalytic subdomain A stretch occupies residues 166–277; it reads LPNVTVIIAF…TNWLPPLLEP (112 aa). Positions 207 and 238 each coordinate substrate. D261 lines the Mn(2+) pocket. S262 is a binding site for substrate. H263 lines the Mn(2+) pocket. The interval 333 to 394 is catalytic subdomain B; that stretch reads PYRTPVLSGA…PCARVGHIGK (62 aa). W363 lines the substrate pocket. Residue H391 coordinates Mn(2+). In terms of domain architecture, Ricin B-type lectin spans 483–618; it reads FSGVIESVAF…NQLEQQWKVG (136 aa). N525 carries N-linked (GlcNAc...) asparagine glycosylation. Intrachain disulfides connect C543–C559 and C586–C606.

It belongs to the glycosyltransferase 2 family. GalNAc-T subfamily. Mn(2+) serves as cofactor. As to expression, during embryonic stages 9-11, weakly expressed in the mesoderm. During embryonic stages 12-13, very weak expression is observed in the somatic mesoderm region. No expression detected from stage 14-15. During embryonic stages 16-17, expressed in the epidermis and the antennomaxillary complex. In third instar larvae, expressed ubiquitously in wing, eye-antennal, leg and haltere imaginal disks.

It is found in the golgi apparatus membrane. The catalysed reaction is L-seryl-[protein] + UDP-N-acetyl-alpha-D-galactosamine = a 3-O-[N-acetyl-alpha-D-galactosaminyl]-L-seryl-[protein] + UDP + H(+). It catalyses the reaction L-threonyl-[protein] + UDP-N-acetyl-alpha-D-galactosamine = a 3-O-[N-acetyl-alpha-D-galactosaminyl]-L-threonyl-[protein] + UDP + H(+). It functions in the pathway protein modification; protein glycosylation. May catalyze the initial reaction in O-linked oligosaccharide biosynthesis, the transfer of an N-acetyl-D-galactosamine residue to a serine or threonine residue on the protein receptor. The chain is Putative polypeptide N-acetylgalactosaminyltransferase 10 (pgant10) from Drosophila melanogaster (Fruit fly).